The primary structure comprises 89 residues: Mapacalcine (89 aa).

Residue Q89 is modified to Glutamine amide.

Homodimer. In terms of processing, contains disulfide bonds which may also be involved in dimerization.

Its function is as follows. Blocks calcium currents via interaction with a yet unknown target protein. Has no effect on L-type, T-type, N-type or P/Q-type voltage-gated calcium channels (VGCC). Has no effect on voltage-gated potassium or chloride channels. Blocks non-L-type VGCC calcium currents in mouse duodenal myocytes (IC(50)=0.2 uM). Blocks calcium influx induced by hypoxia/reoxygenation in rat hepatocytes. This is Mapacalcine from Pione vastifica (Boring sponge).